A 352-amino-acid polypeptide reads, in one-letter code: Histidinol-phosphate aminotransferase (352 aa).

K221 is subject to N6-(pyridoxal phosphate)lysine.

This sequence belongs to the class-II pyridoxal-phosphate-dependent aminotransferase family. Histidinol-phosphate aminotransferase subfamily. Homodimer. Pyridoxal 5'-phosphate is required as a cofactor.

The enzyme catalyses L-histidinol phosphate + 2-oxoglutarate = 3-(imidazol-4-yl)-2-oxopropyl phosphate + L-glutamate. It functions in the pathway amino-acid biosynthesis; L-histidine biosynthesis; L-histidine from 5-phospho-alpha-D-ribose 1-diphosphate: step 7/9. The protein is Histidinol-phosphate aminotransferase of Staphylococcus aureus (strain MSSA476).